A 148-amino-acid polypeptide reads, in one-letter code: Putative transmembrane protein ORF23 (148 aa).

A signal peptide spans 1 to 18 (MVIILLGVSIVVPGLFLA). The Extracellular segment spans residues 19 to 118 (TETPQTNTFE…YVGWPSGAET (100 aa)). Residues 119 to 139 (IITNIADIIIMATAVMIIGAI) traverse the membrane as a helical segment. Over 140 to 148 (YTGYKVSIK) the chain is Cytoplasmic.

The protein localises to the host membrane. In His1 virus (isolate Australia/Victoria) (His1V), this protein is Putative transmembrane protein ORF23.